A 245-amino-acid chain; its full sequence is Syntaxin-61 (245 aa).

Topologically, residues 1–224 (MSSAQDPFYI…VMKKAGAKGQ (224 aa)) are cytoplasmic. Positions 153–215 (MLLIKQQDEE…EFVQKKVGMV (63 aa)) constitute a t-SNARE coiled-coil homology domain. Residues 225-245 (MMMICFLLVLFIILFVLVFLT) traverse the membrane as a helical; Anchor for type IV membrane protein segment.

This sequence belongs to the syntaxin family. In terms of assembly, interacts with VTI12 and either SYP41, SYP42 or SYP51 in the trans-Golgi network or with VTI11 and SYP51 in the prevacuolar compartment to form t-SNARE complexes. Core constituent of the SNARE complex required for membrane fusion at the trans-Golgi network. Also observed in the SYP121-complex and cellulose synthases. Colocalizes with PIP2-7 and SYP121 in trafficking vesicles and at the plasma membrane. Interacts with SYP121 and PIP2-7. As to expression, expressed in root, leaf, stem, flower and silique, but not in hypocotyl or young leaf. Strong expression in the vasculature and in guard cells of the leaf epidermis.

The protein localises to the golgi apparatus. Its subcellular location is the trans-Golgi network membrane. It localises to the prevacuolar compartment membrane. Its function is as follows. Vesicle trafficking protein that functions in the secretory pathway; the fusion of phospholipid vesicles containing SYP61 and VTI12 is triggered by YKT61 and YKT62. Together with VTI12, required for membrane fusion. Involved in osmotic stress tolerance and in abscisic acid (ABA) regulation of stomatal responses. Plays a role in the exocytic trafficking of cellulose synthases (CESAs) and the transport of cell wall components to the plasma membrane. Together with SYP121, regulates the post-Golgi trafficking of the aquaporin PIP2-7 to the plasma membrane, thus modulating cell membrane water permeability. The chain is Syntaxin-61 from Arabidopsis thaliana (Mouse-ear cress).